The following is a 372-amino-acid chain: Probable arabinan endo-1,5-alpha-L-arabinosidase B (372 aa).

The signal sequence occupies residues 1 to 16 (MTVLVALFCLVTWTLC). Positions 23 to 34 (STQGTQQPQQPE) are enriched in low complexity. Residues 23–52 (STQGTQQPQQPEKTPHPHPQPEDAFPPTHA) form a disordered region. Catalysis depends on aspartate 59, which acts as the Proton acceptor. Asparagine 120 carries an N-linked (GlcNAc...) asparagine glycan. Residue glutamate 252 is the Proton donor of the active site. An N-linked (GlcNAc...) asparagine glycan is attached at asparagine 363.

It belongs to the glycosyl hydrolase 43 family.

The protein resides in the secreted. The catalysed reaction is Endohydrolysis of (1-&gt;5)-alpha-arabinofuranosidic linkages in (1-&gt;5)-arabinans.. Its pathway is glycan metabolism; L-arabinan degradation. Endo-1,5-alpha-L-arabinanase involved in degradation of pectin. Its preferred substrate is linear 1,5-alpha-L-arabinan. This is Probable arabinan endo-1,5-alpha-L-arabinosidase B (abnB) from Aspergillus fumigatus (strain ATCC MYA-4609 / CBS 101355 / FGSC A1100 / Af293) (Neosartorya fumigata).